The following is a 426-amino-acid chain: Tol-Pal system protein TolB (426 aa).

An N-terminal signal peptide occupies residues 1-24 (MKLKSRFTSIIGVITLFFSQTVTA).

This sequence belongs to the TolB family. As to quaternary structure, the Tol-Pal system is composed of five core proteins: the inner membrane proteins TolA, TolQ and TolR, the periplasmic protein TolB and the outer membrane protein Pal. They form a network linking the inner and outer membranes and the peptidoglycan layer.

Its subcellular location is the periplasm. Functionally, part of the Tol-Pal system, which plays a role in outer membrane invagination during cell division and is important for maintaining outer membrane integrity. This chain is Tol-Pal system protein TolB, found in Actinobacillus pleuropneumoniae serotype 3 (strain JL03).